Consider the following 241-residue polypeptide: tRNA (guanine-N(7)-)-methyltransferase (241 aa).

The segment covering 1-10 has biased composition (polar residues); it reads MTESNDTPIQ. The tract at residues 1–20 is disordered; that stretch reads MTESNDTPIQTEEGDERQHR. S-adenosyl-L-methionine contacts are provided by Glu-71, Glu-96, Asp-123, and Asp-146. Asp-146 is an active-site residue. Substrate contacts are provided by residues Lys-150, Asp-182, and 219 to 222; that span reads TKFE.

Belongs to the class I-like SAM-binding methyltransferase superfamily. TrmB family.

The catalysed reaction is guanosine(46) in tRNA + S-adenosyl-L-methionine = N(7)-methylguanosine(46) in tRNA + S-adenosyl-L-homocysteine. It participates in tRNA modification; N(7)-methylguanine-tRNA biosynthesis. Functionally, catalyzes the formation of N(7)-methylguanine at position 46 (m7G46) in tRNA. The chain is tRNA (guanine-N(7)-)-methyltransferase from Pseudomonas fluorescens (strain Pf0-1).